Reading from the N-terminus, the 477-residue chain is GH30 family xylanase (477 aa).

The N-terminal stretch at Met-1 to Ala-19 is a signal peptide. Asn-194, Asn-237, and Asn-331 each carry an N-linked (GlcNAc...) asparagine glycan.

The protein belongs to the glycosyl hydrolase 30 family.

It is found in the secreted. With respect to regulation, activity is enhanced by 10 mM Co(2+), Cu 2(2+) and Mn(2+) to levels as high as 44%. Partial inhibition of activity from 5 to 15% is observed in the presence of the following compouinds at a centration of 10 mM (from higher inhibition to lower): EDTA &gt; Mg(2+) &gt; urea, Zn(2+) &gt; Fe(3+). In terms of biological role, xylanase exhibiting endo- and exo-xylanase activity. Shows the highest activity toward beechwood glucuronoxylan, which consists of a beta-1,4-linked xylose backbone decorated with the methylated form of D-glucuronic acid (MeGlcA) attached directly to the main chain at xylose C2. Also acts against wheat arabinoxylan, a xylan without MeGlcA substituents along the main chain, but the xylanase activity is about two orders of magnitude lower than that achieved in the case of beechwood xylan. Shows no activity against carob galactomannan, konjac glucomannan, or barley beta-glucan. The recombinant xylanase also exhibits an exo-activity by releasing processively disaccharide units from the non-reducing end of linear and decorated xylooligosaccharides (XOS). The chain is GH30 family xylanase from Thermothelomyces thermophilus (strain ATCC 42464 / BCRC 31852 / DSM 1799) (Sporotrichum thermophile).